Consider the following 150-residue polypeptide: UPF0506 protein SJCHGC03047 (150 aa).

The first 18 residues, 1–18, serve as a signal peptide directing secretion; it reads MNTCIQLLILCLVTLTNS. 3 N-linked (GlcNAc...) asparagine glycosylation sites follow: Asn-20, Asn-48, and Asn-110. Intrachain disulfides connect Cys-116-Cys-130, Cys-123-Cys-134, and Cys-129-Cys-139.

This sequence belongs to the UPF0506 family.

It is found in the secreted. The polypeptide is UPF0506 protein SJCHGC03047 (Schistosoma japonicum (Blood fluke)).